We begin with the raw amino-acid sequence, 1707 residues long: Mediator of DNA damage checkpoint protein 1 (1707 aa).

The disordered stretch occupies residues methionine 1 to serine 23. An interaction with CHEK2 region spans residues methionine 1–threonine 150. Positions glutamate 2–threonine 222 are interaction with the MRN complex. At threonine 4 the chain carries Phosphothreonine. Residues tryptophan 9–glutamate 18 are compositionally biased toward acidic residues. One can recognise an FHA domain in the interval asparagine 54–arginine 105. Position 146 is a phosphothreonine (threonine 146). Positions alanine 166 to valine 328 are disordered. A phosphoserine mark is found at serine 168 and serine 176. Positions glycine 183 to alanine 192 are enriched in polar residues. Residues serine 198 and serine 220 each carry the phosphoserine modification. Phosphothreonine is present on threonine 222. Positions alanine 252–proline 263 are enriched in polar residues. Over residues threonine 264 to glycine 278 the composition is skewed to basic and acidic residues. A Phosphoserine modification is found at serine 298. Phosphothreonine is present on threonine 300. Phosphoserine is present on serine 313. Position 315 is a phosphothreonine (threonine 315). Residue serine 360 is modified to Phosphoserine. Position 362 is a phosphothreonine (threonine 362). Residues alanine 369 to histidine 378 show a composition bias toward basic and acidic residues. Residues alanine 369 to serine 398 are disordered. Serine 385 is modified (phosphoserine). A compositionally biased stretch (acidic residues) spans aspartate 386–valine 397. At threonine 387 the chain carries Phosphothreonine. A phosphoserine mark is found at serine 398, serine 415, serine 425, serine 438, and serine 442. Disordered regions lie at residues aspartate 417–histidine 497, proline 520–cysteine 642, leucine 679–glycine 699, and arginine 718–leucine 746. Over residues serine 425–glycine 439 the composition is skewed to polar residues. At threonine 444 the chain carries Phosphothreonine. At serine 461 the chain carries Phosphoserine. Threonine 470 carries the post-translational modification Phosphothreonine. Serine 492, serine 493, serine 591, serine 593, and serine 595 each carry phosphoserine. A compositionally biased stretch (polar residues) spans valine 580–serine 595. Over residues glycine 626–cysteine 642 the composition is skewed to basic and acidic residues. The segment covering glutamate 719–histidine 730 has biased composition (basic and acidic residues). Serine 735 and serine 750 each carry phosphoserine. Residue lysine 769 is modified to N6-acetyllysine. Basic and acidic residues-rich tracts occupy residues alanine 778 to isoleucine 804, threonine 812 to glutamate 868, and threonine 875 to lysine 889. Disordered stretches follow at residues alanine 778–proline 899 and isoleucine 914–alanine 1510. Phosphoserine is present on residues serine 885, serine 929, and serine 962. Low complexity predominate over residues serine 968–leucine 986. The residue at position 991 (serine 991) is a Phosphoserine. Polar residues-rich tracts occupy residues proline 1026–threonine 1056, glutamine 1068–threonine 1086, and glutamate 1101–threonine 1113. Phosphothreonine is present on threonine 1056. Serine 1104, serine 1126, and serine 1128 each carry phosphoserine. Residues threonine 1132, threonine 1173, and threonine 1234 each carry the phosphothreonine modification. Composition is skewed to polar residues over residues proline 1225–alanine 1241, proline 1265–alanine 1281, valine 1295–lysine 1308, and leucine 1317–proline 1326. Phosphothreonine occurs at positions 1297 and 1298. Serine 1327 is subject to Phosphoserine. The segment covering proline 1343–glutamine 1363 has biased composition (polar residues). Residue threonine 1352 is modified to Phosphothreonine. Serine 1359 is modified (phosphoserine). Over residues serine 1364–proline 1376 the composition is skewed to low complexity. Threonine 1375 is subject to Phosphothreonine. Pro residues predominate over residues leucine 1378–isoleucine 1393. Residue lysine 1418 forms a Glycyl lysine isopeptide (Lys-Gly) (interchain with G-Cter in SUMO2) linkage. The segment covering serine 1421 to alanine 1441 has biased composition (low complexity). 4 positions are modified to phosphoserine: serine 1435, serine 1436, serine 1439, and serine 1443. Over residues valine 1459 to proline 1473 the composition is skewed to basic and acidic residues. Residue lysine 1461 forms a Glycyl lysine isopeptide (Lys-Gly) (interchain with G-Cter in SUMO1); alternate linkage. A Glycyl lysine isopeptide (Lys-Gly) (interchain with G-Cter in SUMO2); alternate cross-link involves residue lysine 1461. Position 1480 is a phosphothreonine (threonine 1480). A compositionally biased stretch (basic and acidic residues) spans proline 1481–threonine 1493. Position 1496 is an N6-acetyllysine (lysine 1496). BRCT domains are found at residues alanine 1510 to valine 1588 and arginine 1609 to serine 1700.

As to quaternary structure, homodimer. Interacts with H2AX, which requires phosphorylation of H2AX on 'Ser-139'. Interacts with the MRN complex, composed of MRE11, RAD50, and NBN. Interacts with CHEK2, which requires ATM-mediated phosphorylation of 'Thr-68' within the FHA domain of CHEK2. Interacts constitutively with the BRCA1-BARD1 complex, SMC1A and TP53BP1. Interacts with ATM and FANCD2, and these interactions are reduced upon DNA damage. Also interacts with the PRKDC complex, composed of XRCC6/KU70, XRCC5/KU80 and PRKDC/XRCC7. This interaction may be required for PRKDC autophosphorylation, which is essential for DNA double strand break (DSB) repair. When phosphorylated by ATM, interacts with RNF8 (via FHA domain). Interacts with CEP164. When phosphorylated, interacts with APTX (via FHA-like domain). Interacts (when phosphorylated) with TOPBP1; promoting TOPBP1 localization to DNA damage sites during mitosis. Interacts (when phosphorylated) with NBN; promoting NBN and MRN complex localization to DNA damage sites. In terms of processing, phosphorylated upon exposure to ionizing radiation (IR), ultraviolet radiation (UV), and hydroxyurea (HU). Phosphorylation in response to IR requires ATM, NBN, and possibly CHEK2. Also phosphorylated during the G2/M phase of the cell cycle and during activation of the mitotic spindle checkpoint. Phosphorylation at Thr-4 by ATM stabilizes and enhances homodimerization via the FHA domain. Phosphorylated at Ser-168 and Ser-198 by CK2 in response to DNA damage during mitosis, promoting interaction with TOPBP1. Phosphorylated by CK2 in response to DNA damage, promoting interaction with NBN and recruitment of the MRN complex to DNA damage sites. Post-translationally, sumoylation at Lys-1461 by PIAS4 following DNA damage promotes ubiquitin-mediated degradation. Ubiquitinated by RNF4, leading to proteasomal degradation; undergoes 'Lys-48'-linked polyubiquitination.

The protein resides in the nucleus. It localises to the chromosome. Histone reader protein required for checkpoint-mediated cell cycle arrest in response to DNA damage within both the S phase and G2/M phases of the cell cycle. Specifically recognizes and binds histone H2AX phosphorylated at 'Ser-139', a marker of DNA damage, serving as a scaffold for the recruitment of DNA repair and signal transduction proteins to discrete foci of DNA damage sites. Also required for downstream events subsequent to the recruitment of these proteins. These include phosphorylation and activation of the ATM, CHEK1 and CHEK2 kinases, and stabilization of TP53/p53 and apoptosis. ATM and CHEK2 may also be activated independently by a parallel pathway mediated by TP53BP1. Required for chromosomal stability during mitosis by promoting recruitment of TOPBP1 to DNA double strand breaks (DSBs): TOPBP1 forms filamentous assemblies that bridge MDC1 and tether broken chromosomes during mitosis. Required for the repair of DSBs via homologous recombination by promoting recruitment of NBN component of the MRN complex to DSBs. The sequence is that of Mediator of DNA damage checkpoint protein 1 (Mdc1) from Mus musculus (Mouse).